The chain runs to 329 residues: Putative oligopeptide transport ATP-binding protein YkfD (329 aa).

The ABC transporter domain maps to 7-252 (LEVSQLKMHF…PLHPYTKALL (246 aa)). 44 to 51 (GESGCGKS) serves as a coordination point for ATP.

This sequence belongs to the ABC transporter superfamily.

In Bacillus subtilis (strain 168), this protein is Putative oligopeptide transport ATP-binding protein YkfD (ykfD).